The primary structure comprises 298 residues: Ribosomal RNA small subunit methyltransferase A (298 aa).

Asparagine 35, leucine 37, glycine 62, glutamate 83, aspartate 108, and asparagine 133 together coordinate S-adenosyl-L-methionine.

This sequence belongs to the class I-like SAM-binding methyltransferase superfamily. rRNA adenine N(6)-methyltransferase family. RsmA subfamily.

Its subcellular location is the cytoplasm. It catalyses the reaction adenosine(1518)/adenosine(1519) in 16S rRNA + 4 S-adenosyl-L-methionine = N(6)-dimethyladenosine(1518)/N(6)-dimethyladenosine(1519) in 16S rRNA + 4 S-adenosyl-L-homocysteine + 4 H(+). In terms of biological role, specifically dimethylates two adjacent adenosines (A1518 and A1519) in the loop of a conserved hairpin near the 3'-end of 16S rRNA in the 30S particle. May play a critical role in biogenesis of 30S subunits. The chain is Ribosomal RNA small subunit methyltransferase A from Streptococcus pyogenes serotype M2 (strain MGAS10270).